The chain runs to 816 residues: Sucrose synthase 2 (816 aa).

Position 15 is a phosphoserine (serine 15). The tract at residues 280-757 (MVFNVVILSP…GLQRIEEKYT (478 aa)) is GT-B glycosyltransferase.

This sequence belongs to the glycosyltransferase 1 family. Plant sucrose synthase subfamily.

It catalyses the reaction an NDP-alpha-D-glucose + D-fructose = a ribonucleoside 5'-diphosphate + sucrose + H(+). In terms of biological role, sucrose-cleaving enzyme that provides UDP-glucose and fructose for various metabolic pathways. The chain is Sucrose synthase 2 (SUS1) from Zea mays (Maize).